The sequence spans 397 residues: Elongation factor Tu (397 aa).

One can recognise a tr-type G domain in the interval 10–206 (KPHCNIGTIG…TIDEYVPDPE (197 aa)). Positions 19-26 (GHVDHGKT) are G1. 19-26 (GHVDHGKT) is a binding site for GTP. Mg(2+) is bound at residue Thr-26. The segment at 61-65 (GITIS) is G2. Residues 82–85 (DCPG) are G3. Residues 82–86 (DCPGH) and 137–140 (NKCD) contribute to the GTP site. Residues 137-140 (NKCD) form a G4 region. The interval 175-177 (SAL) is G5.

The protein belongs to the TRAFAC class translation factor GTPase superfamily. Classic translation factor GTPase family. EF-Tu/EF-1A subfamily. As to quaternary structure, monomer.

The protein resides in the cytoplasm. It carries out the reaction GTP + H2O = GDP + phosphate + H(+). GTP hydrolase that promotes the GTP-dependent binding of aminoacyl-tRNA to the A-site of ribosomes during protein biosynthesis. In Lachnospira eligens (strain ATCC 27750 / DSM 3376 / VPI C15-48 / C15-B4) (Eubacterium eligens), this protein is Elongation factor Tu.